A 591-amino-acid chain; its full sequence is Eukaryotic translation initiation factor 3 subunit D (591 aa).

Positions 100–159 (SGGNPDEDAAFRLVDGKPPPRPKFGPKWRFNPHHNRNQLPQRRDEEVEAKKRDAEKERAR) are disordered. The span at 123-135 (FGPKWRFNPHHNR) shows a compositional bias: basic residues. A compositionally biased stretch (basic and acidic residues) spans 140–159 (QRRDEEVEAKKRDAEKERAR). The RNA gate stretch occupies residues 309 to 323 (QLDLLSVHETSQEPL). The span at 549 to 560 (DYVEEPLPEDEQ) shows a compositional bias: acidic residues. The interval 549–591 (DYVEEPLPEDEQVQPTEENTEGAEASVAATKETEEKKADDAQA) is disordered. Positions 579-591 (KETEEKKADDAQA) are enriched in basic and acidic residues.

This sequence belongs to the eIF-3 subunit D family. In terms of assembly, component of the eukaryotic translation initiation factor 3 (eIF-3) complex, which is composed of at least 13 different subunits.

Its subcellular location is the cytoplasm. Its function is as follows. mRNA cap-binding component of the eukaryotic translation initiation factor 3 (eIF-3) complex, which is involved in protein synthesis of a specialized repertoire of mRNAs and, together with other initiation factors, stimulates binding of mRNA and methionyl-tRNAi to the 40S ribosome. The eIF-3 complex specifically targets and initiates translation of a subset of mRNAs involved in cell proliferation. In the eIF-3 complex, eif3d specifically recognizes and binds the 7-methylguanosine cap of a subset of mRNAs. This is Eukaryotic translation initiation factor 3 subunit D (TIF3D1) from Arabidopsis thaliana (Mouse-ear cress).